The chain runs to 63 residues: Lantibiotic mutacin-1140 (63 aa).

A propeptide spanning residues 1–41 (MSNTQLLEVLGTETFDVQEDLFAFDTTDTTIVASNDDPDTR) is cleaved from the precursor. A cross-link (lanthionine (Ser-Cys)) is located at residues 44–48 (SWSLC). S46 carries the 2,3-didehydroalanine (Ser) modification. The segment at residues 49–52 (TPGC) is a cross-link (beta-methyllanthionine (Thr-Cys)). The residue at position 55 (T55) is a 2,3-didehydrobutyrine. A cross-link (lanthionine (Ser-Cys)) is located at residues 57–62 (SFNSYC). The segment at residues 60–63 (SYCC) is a cross-link (S-(2-aminovinyl)-D-cysteine (Ser-Cys)).

Belongs to the type A lantibiotic family. In terms of processing, maturation of lantibiotics involves the enzymatic conversion of Thr, and Ser into dehydrated AA and the formation of thioether bonds with cysteine. The C-terminal lanthionine undergoes decarboxylation. This is followed by membrane translocation and cleavage of the modified precursor. Post-translationally, the structure of the 2,3-didehydrobutyrine is not discussed in PubMed:11082191.

Functionally, lanthionine-containing peptide antibiotic (lantibiotic) active on Gram-positive bacteria. The bactericidal activity of lantibiotics is based on depolarization of energized bacterial cytoplasmic membranes, initiated by the formation of aqueous transmembrane pores. The chain is Lantibiotic mutacin-1140 (lanA) from Streptococcus mutans.